The following is a 109-amino-acid chain: Insulin (109 aa).

A signal peptide spans 1–24; the sequence is MAPWMHLLTVLALLALWGPNSVQA. 3 disulfides stabilise this stretch: Cys31/Cys93, Cys43/Cys106, and Cys92/Cys97. The propeptide at 56–84 is c peptide; it reads ELEDLQVEQAELGLEAGGLQPSALEMILQ.

This sequence belongs to the insulin family. As to quaternary structure, heterodimer of a B chain and an A chain linked by two disulfide bonds.

It is found in the secreted. Its function is as follows. Insulin decreases blood glucose concentration. It increases cell permeability to monosaccharides, amino acids and fatty acids. It accelerates glycolysis, the pentose phosphate cycle, and glycogen synthesis in liver. In Octodon degus (Degu), this protein is Insulin (INS).